The primary structure comprises 537 residues: Chaperonin GroEL 1 (537 aa).

ATP contacts are provided by residues 29-32, 86-90, glycine 413, 478-480, and aspartate 494; these read TLGP, DGTTT, and NAA.

Belongs to the chaperonin (HSP60) family. In terms of assembly, forms a cylinder of 14 subunits composed of two heptameric rings stacked back-to-back. Interacts with the co-chaperonin GroES.

The protein localises to the cytoplasm. The enzyme catalyses ATP + H2O + a folded polypeptide = ADP + phosphate + an unfolded polypeptide.. Functionally, together with its co-chaperonin GroES, plays an essential role in assisting protein folding. The GroEL-GroES system forms a nano-cage that allows encapsulation of the non-native substrate proteins and provides a physical environment optimized to promote and accelerate protein folding. The protein is Chaperonin GroEL 1 of Corynebacterium efficiens (strain DSM 44549 / YS-314 / AJ 12310 / JCM 11189 / NBRC 100395).